Reading from the N-terminus, the 432-residue chain is Glutamyl-tRNA reductase (432 aa).

Substrate-binding positions include 50-53, serine 110, 115-117, and glutamine 121; these read TCNR and ETQ. Cysteine 51 (nucleophile) is an active-site residue. 190 to 195 contacts NADP(+); sequence GAGEMG.

It belongs to the glutamyl-tRNA reductase family. Homodimer.

It catalyses the reaction (S)-4-amino-5-oxopentanoate + tRNA(Glu) + NADP(+) = L-glutamyl-tRNA(Glu) + NADPH + H(+). It functions in the pathway porphyrin-containing compound metabolism; protoporphyrin-IX biosynthesis; 5-aminolevulinate from L-glutamyl-tRNA(Glu): step 1/2. Catalyzes the NADPH-dependent reduction of glutamyl-tRNA(Glu) to glutamate 1-semialdehyde (GSA). The polypeptide is Glutamyl-tRNA reductase (Nitratiruptor sp. (strain SB155-2)).